Here is a 670-residue protein sequence, read N- to C-terminus: Penicillin-binding protein activator LpoA (670 aa).

The first 26 residues, 1 to 26, serve as a signal peptide directing secretion; that stretch reads MLPSKVVHRKAVRTVPLLLAALIFAG. A lipid anchor (N-palmitoyl cysteine) is attached at C27. A lipid anchor (S-diacylglycerol cysteine) is attached at C27.

The protein belongs to the LpoA family. Interacts with PBP1a.

Its subcellular location is the cell outer membrane. In terms of biological role, regulator of peptidoglycan synthesis that is essential for the function of penicillin-binding protein 1A (PBP1a). This Erwinia tasmaniensis (strain DSM 17950 / CFBP 7177 / CIP 109463 / NCPPB 4357 / Et1/99) protein is Penicillin-binding protein activator LpoA.